A 179-amino-acid polypeptide reads, in one-letter code: Large ribosomal subunit protein uL5 (179 aa).

This sequence belongs to the universal ribosomal protein uL5 family. As to quaternary structure, part of the 50S ribosomal subunit; part of the 5S rRNA/L5/L18/L25 subcomplex. Contacts the 5S rRNA and the P site tRNA. Forms a bridge to the 30S subunit in the 70S ribosome.

In terms of biological role, this is one of the proteins that bind and probably mediate the attachment of the 5S RNA into the large ribosomal subunit, where it forms part of the central protuberance. In the 70S ribosome it contacts protein S13 of the 30S subunit (bridge B1b), connecting the 2 subunits; this bridge is implicated in subunit movement. Contacts the P site tRNA; the 5S rRNA and some of its associated proteins might help stabilize positioning of ribosome-bound tRNAs. The chain is Large ribosomal subunit protein uL5 from Bacillus cereus (strain G9842).